The chain runs to 73 residues: Exodeoxyribonuclease 7 small subunit (73 aa).

It belongs to the XseB family. Heterooligomer composed of large and small subunits.

The protein resides in the cytoplasm. It carries out the reaction Exonucleolytic cleavage in either 5'- to 3'- or 3'- to 5'-direction to yield nucleoside 5'-phosphates.. Bidirectionally degrades single-stranded DNA into large acid-insoluble oligonucleotides, which are then degraded further into small acid-soluble oligonucleotides. In Clostridium novyi (strain NT), this protein is Exodeoxyribonuclease 7 small subunit.